Reading from the N-terminus, the 179-residue chain is Ribosome maturation factor RimM (179 aa).

Residues 102–179 (DGEYYWYQLE…EMKVDWDADF (78 aa)) enclose the PRC barrel domain.

This sequence belongs to the RimM family. Binds ribosomal protein uS19.

Its subcellular location is the cytoplasm. Functionally, an accessory protein needed during the final step in the assembly of 30S ribosomal subunit, possibly for assembly of the head region. Essential for efficient processing of 16S rRNA. May be needed both before and after RbfA during the maturation of 16S rRNA. It has affinity for free ribosomal 30S subunits but not for 70S ribosomes. The sequence is that of Ribosome maturation factor RimM from Pseudomonas savastanoi pv. phaseolicola (strain 1448A / Race 6) (Pseudomonas syringae pv. phaseolicola (strain 1448A / Race 6)).